The primary structure comprises 356 residues: uncharacterized protein (356 aa).

The next 6 helical transmembrane spans lie at 2–22 (FEAIIYNISVTVAGIYLFHRL), 36–56 (YVTVLMTIVALLLSAYPVPIF), 77–97 (MFYTVLSAFIVGLVNVLIGDY), 99–119 (IITAMIFIVIAGIIGAIGPFL), 124–144 (IISLQILNVIALVIFAILSLI), and 154–174 (LFLIPISFVLTITSSITFVDI). The GGDEF domain maps to 218–353 (QSLGLLLIDI…GRNQVMFNPI (136 aa)).

It localises to the cell membrane. This is an uncharacterized protein from Staphylococcus saprophyticus subsp. saprophyticus (strain ATCC 15305 / DSM 20229 / NCIMB 8711 / NCTC 7292 / S-41).